The primary structure comprises 601 residues: Aspartate--tRNA(Asp/Asn) ligase (601 aa).

L-aspartate is bound at residue Glu177. Residues 201–204 (QLFK) are aspartate. Arg223 serves as a coordination point for L-aspartate. ATP is bound by residues 223–225 (RDE) and Gln232. His455 is an L-aspartate binding site. Residue Glu489 coordinates ATP. Arg496 is an L-aspartate binding site. Residue 541–544 (GWDR) participates in ATP binding. The disordered stretch occupies residues 568 to 601 (VDPLTDAPAPIPLEQRRETGVDFKPKKKTDESAV). A compositionally biased stretch (basic and acidic residues) spans 581-601 (EQRRETGVDFKPKKKTDESAV).

This sequence belongs to the class-II aminoacyl-tRNA synthetase family. Type 1 subfamily. Homodimer.

It is found in the cytoplasm. It catalyses the reaction tRNA(Asx) + L-aspartate + ATP = L-aspartyl-tRNA(Asx) + AMP + diphosphate. In terms of biological role, aspartyl-tRNA synthetase with relaxed tRNA specificity since it is able to aspartylate not only its cognate tRNA(Asp) but also tRNA(Asn). Reaction proceeds in two steps: L-aspartate is first activated by ATP to form Asp-AMP and then transferred to the acceptor end of tRNA(Asp/Asn). In Corynebacterium diphtheriae (strain ATCC 700971 / NCTC 13129 / Biotype gravis), this protein is Aspartate--tRNA(Asp/Asn) ligase.